We begin with the raw amino-acid sequence, 615 residues long: Protein DlpA (615 aa).

It belongs to the isocitrate and isopropylmalate dehydrogenases family. The protein to M.jannaschii MJ0644 in the C-terminal section.

This chain is Protein DlpA (dlpA), found in Legionella pneumophila subsp. pneumophila (strain Philadelphia 1 / ATCC 33152 / DSM 7513).